A 490-amino-acid chain; its full sequence is Myocilin (490 aa).

A signal peptide spans 1-18 (MPAVQLLLLACLLGGVGA). Positions 51–170 (GQAMLAIQEL…QEVASLRRGQ (120 aa)) form a coiled coil. The disordered stretch occupies residues 152–186 (LARRLESSSQEVASLRRGQCPQAHSSSQDVPSGSR). A compositionally biased stretch (polar residues) spans 173-182 (QAHSSSQDVP). The Olfactomedin-like domain maps to 230–489 (GCGELVWVGE…MVSYDIKLSR (260 aa)). An intrachain disulfide couples Cys-231 to Cys-419. The Ca(2+) site is built by Asp-366, Asn-414, Ala-415, Ile-463, and Asp-464. Positions 488 to 490 (SRL) match the Microbody targeting signal motif.

As to quaternary structure, homodimer (via N-terminus). Can also form higher oligomers. Interacts with OLFM3, FN1, NRCAM, GLDN and NFASC. Interacts (via N-terminus) with MYL2. Interacts with SFRP1, FRZB, FZD7, FZD10, FZD1 and WIF1; regulates Wnt signaling. Interacts with SNTA1; regulates muscle hypertrophy. Interacts with ERBB2 and ERBB3; activates ERBB2-ERBB3 signaling pathway. Interacts with SNCG; affects its secretion and its aggregation. In terms of processing, palmitoylated. Undergoes a calcium-dependent proteolytic cleavage at Gln-212 by CAPN2 in the endoplasmic reticulum. The result is the production of two fragments, one of 35 kDa containing the C-terminal olfactomedin-like domain, and another of 20 kDa containing the N-terminal leucine zipper-like domain. Post-translationally, glycosylated. As to expression, the myocilin 35 kDa fragment is detected in iris and ciliary body.

It is found in the secreted. The protein localises to the golgi apparatus. Its subcellular location is the cytoplasmic vesicle. The protein resides in the extracellular space. It localises to the extracellular matrix. It is found in the extracellular exosome. The protein localises to the mitochondrion. Its subcellular location is the mitochondrion intermembrane space. The protein resides in the mitochondrion inner membrane. It localises to the mitochondrion outer membrane. It is found in the rough endoplasmic reticulum. The protein localises to the cell projection. Its subcellular location is the cilium. The protein resides in the endoplasmic reticulum. In terms of biological role, secreted glycoprotein regulating the activation of different signaling pathways in adjacent cells to control different processes including cell adhesion, cell-matrix adhesion, cytoskeleton organization and cell migration. Promotes substrate adhesion, spreading and formation of focal contacts. Negatively regulates cell-matrix adhesion and stress fiber assembly through Rho protein signal transduction. Modulates the organization of actin cytoskeleton by stimulating the formation of stress fibers through interactions with components of Wnt signaling pathways. Promotes cell migration through activation of PTK2 and the downstream phosphatidylinositol 3-kinase signaling. Plays a role in bone formation and promotes osteoblast differentiation in a dose-dependent manner through mitogen-activated protein kinase signaling. Mediates myelination in the peripheral nervous system through ERBB2/ERBB3 signaling. Plays a role as a regulator of muscle hypertrophy through the components of dystrophin-associated protein complex. Involved in positive regulation of mitochondrial depolarization. Plays a role in neurite outgrowth. May participate in the obstruction of fluid outflow in the trabecular meshwork. This is Myocilin (MYOC) from Bos taurus (Bovine).